A 552-amino-acid chain; its full sequence is Putative acetolactate synthase large subunit IlvB2 (552 aa).

A thiamine diphosphate-binding site is contributed by Glu48. Residues 262-285 and 309-328 each bind FAD; these read FGDGRADEYLFDTPCDLLIAVGVS and DPDPSAVGRFVATSLGITTS. The segment at 394 to 474 is thiamine pyrophosphate binding; that stretch reads TCISWTFRGI…VTWAVLNDGQ (81 aa). Asp445 lines the Mg(2+) pocket.

Belongs to the TPP enzyme family. As to quaternary structure, heterodimer of large catalytic subunit and small regulatory subunit. Mg(2+) serves as cofactor. Requires thiamine diphosphate as cofactor.

The catalysed reaction is 2 pyruvate + H(+) = (2S)-2-acetolactate + CO2. Its pathway is amino-acid biosynthesis; L-isoleucine biosynthesis; L-isoleucine from 2-oxobutanoate: step 1/4. It functions in the pathway amino-acid biosynthesis; L-valine biosynthesis; L-valine from pyruvate: step 1/4. Catalyzes the conversion of 2 pyruvate molecules into acetolactate in the first common step of the biosynthetic pathway of the branched-amino acids such as leucine, isoleucine, and valine. In Mycobacterium tuberculosis (strain ATCC 25618 / H37Rv), this protein is Putative acetolactate synthase large subunit IlvB2 (ilvB2).